Reading from the N-terminus, the 398-residue chain is Enolase (398 aa).

Gln154 provides a ligand contact to (2R)-2-phosphoglycerate. The active-site Proton donor is the Glu196. Residues Asp232, Glu273, and Asp300 each contribute to the Mg(2+) site. Residues Lys325, Arg354, Ser355, and Lys376 each coordinate (2R)-2-phosphoglycerate. The Proton acceptor role is filled by Lys325.

Belongs to the enolase family. Mg(2+) is required as a cofactor.

It localises to the cytoplasm. The protein resides in the secreted. The protein localises to the cell surface. It catalyses the reaction (2R)-2-phosphoglycerate = phosphoenolpyruvate + H2O. It functions in the pathway carbohydrate degradation; glycolysis; pyruvate from D-glyceraldehyde 3-phosphate: step 4/5. Its function is as follows. Catalyzes the reversible conversion of 2-phosphoglycerate (2-PG) into phosphoenolpyruvate (PEP). It is essential for the degradation of carbohydrates via glycolysis. This is Enolase from Natronomonas pharaonis (strain ATCC 35678 / DSM 2160 / CIP 103997 / JCM 8858 / NBRC 14720 / NCIMB 2260 / Gabara) (Halobacterium pharaonis).